A 572-amino-acid polypeptide reads, in one-letter code: Proline--tRNA ligase (572 aa).

It belongs to the class-II aminoacyl-tRNA synthetase family. ProS type 1 subfamily. In terms of assembly, homodimer. May form a tertiary complex with YbaK and t-RNA(Pro).

It is found in the cytoplasm. It catalyses the reaction tRNA(Pro) + L-proline + ATP = L-prolyl-tRNA(Pro) + AMP + diphosphate. In terms of biological role, catalyzes the attachment of proline to tRNA(Pro) in a two-step reaction: proline is first activated by ATP to form Pro-AMP and then transferred to the acceptor end of tRNA(Pro). As ProRS can inadvertently accommodate and process non-cognate amino acids such as alanine and cysteine, to avoid such errors it has two additional distinct editing activities against alanine. One activity is designated as 'pretransfer' editing and involves the tRNA(Pro)-independent hydrolysis of activated Ala-AMP. The other activity is designated 'posttransfer' editing and involves deacylation of mischarged Ala-tRNA(Pro). The misacylated Cys-tRNA(Pro) is not edited by ProRS, but is probably edited in trans by YbaK. This chain is Proline--tRNA ligase, found in Haemophilus influenzae (strain ATCC 51907 / DSM 11121 / KW20 / Rd).